The chain runs to 206 residues: Putative cryptic phosphonate transport system permease protein PhnE1 (206 aa).

3 helical membrane passes run 30-50 (WFSL…WQGA), 92-112 (IAVW…LMSA), and 137-157 (MVFA…GVLA).

In terms of assembly, if the reading frame is restored, the complex is composed of two ATP-binding proteins (PhnC), two transmembrane proteins (PhnE) and a solute-binding protein (PhnD).

Its subcellular location is the cell inner membrane. In terms of biological role, N-terminal fragment of the PhnE protein, part of a phosphonate usage operon that is cryptic in K12 strains. Growth of K12 strains on phosphonate can be observed when it is used as the sole phosphorus source after a 60 hour lag period, suggesting the operon is activated. An intact PhnE in strain B is (AC A0A140NFA3). Part of the binding-protein-dependent transport system for phosphonates; probably responsible for the translocation of the substrate across the membrane. This Escherichia coli (strain K12) protein is Putative cryptic phosphonate transport system permease protein PhnE1 (phnE1).